A 42-amino-acid polypeptide reads, in one-letter code: Large ribosomal subunit protein bL36 (42 aa).

It belongs to the bacterial ribosomal protein bL36 family.

In Anaplasma phagocytophilum (strain HZ), this protein is Large ribosomal subunit protein bL36.